Consider the following 610-residue polypeptide: T-cell immunomodulatory protein (610 aa).

The first 32 residues, Met1 to Ala32, serve as a signal peptide directing secretion. Asn35, Asn94, Asn123, Asn138, Asn145, Asn150, Asn175, and Asn241 each carry an N-linked (GlcNAc...) asparagine glycan. One copy of the FG-GAP 1; atypical repeat lies at Leu98–Trp135. The FG-GAP 2; atypical repeat unit spans residues Phe153–Leu183. The FG-GAP 3; atypical repeat unit spans residues Val256–Met291. Residues Asn351, Asn369, and Asn480 are each glycosylated (N-linked (GlcNAc...) asparagine). The helical transmembrane segment at Ile564–Ala584 threads the bilayer.

It belongs to the TIP family. Interacts with RUVBL1, RUVBL2 and alpha-tubulin.

The protein localises to the secreted. The protein resides in the cell membrane. Its function is as follows. Modulator of T-cell function. Has a protective effect in graft versus host disease model. The polypeptide is T-cell immunomodulatory protein (Rattus norvegicus (Rat)).